The chain runs to 468 residues: 6-phospho-beta-galactosidase (468 aa).

D-galactose 6-phosphate contacts are provided by Gln19, His116, Asn159, Glu160, and Asn297. The active-site Proton donor is Glu160. The active-site Nucleophile is the Glu375. D-galactose 6-phosphate-binding residues include Ser428, Trp429, Lys435, and Tyr437.

The protein belongs to the glycosyl hydrolase 1 family.

It catalyses the reaction a 6-phospho-beta-D-galactoside + H2O = D-galactose 6-phosphate + an alcohol. It participates in carbohydrate metabolism; lactose degradation; D-galactose 6-phosphate and beta-D-glucose from lactose 6-phosphate: step 1/1. The polypeptide is 6-phospho-beta-galactosidase (Streptococcus agalactiae serotype III (strain NEM316)).